Consider the following 84-residue polypeptide: Sec-independent protein translocase protein TatA (84 aa).

The helical transmembrane segment at 1 to 21 threads the bilayer; it reads MGGISIWQLLIIAVIVILLFG. The segment at 40 to 84 is disordered; sequence KKAMSDEDKPADKKDADFEPKNIEQQKTEASAETTAETKKDKEQA. Basic and acidic residues-rich tracts occupy residues 42–66 and 75–84; these read AMSDEDKPADKKDADFEPKNIEQQK and AETKKDKEQA.

Belongs to the TatA/E family. In terms of assembly, the Tat system comprises two distinct complexes: a TatABC complex, containing multiple copies of TatA, TatB and TatC subunits, and a separate TatA complex, containing only TatA subunits. Substrates initially bind to the TatABC complex, which probably triggers association of the separate TatA complex to form the active translocon.

It is found in the cell inner membrane. Its function is as follows. Part of the twin-arginine translocation (Tat) system that transports large folded proteins containing a characteristic twin-arginine motif in their signal peptide across membranes. TatA could form the protein-conducting channel of the Tat system. The protein is Sec-independent protein translocase protein TatA of Vibrio atlanticus (strain LGP32) (Vibrio splendidus (strain Mel32)).